Reading from the N-terminus, the 452-residue chain is Phosphoglucosamine mutase (452 aa).

Ser101 functions as the Phosphoserine intermediate in the catalytic mechanism. The Mg(2+) site is built by Ser101, Asp241, Asp243, and Asp245. Ser101 carries the phosphoserine modification.

The protein belongs to the phosphohexose mutase family. It depends on Mg(2+) as a cofactor. In terms of processing, activated by phosphorylation.

It catalyses the reaction alpha-D-glucosamine 1-phosphate = D-glucosamine 6-phosphate. Functionally, catalyzes the conversion of glucosamine-6-phosphate to glucosamine-1-phosphate. This chain is Phosphoglucosamine mutase, found in Lactococcus lactis subsp. lactis (strain IL1403) (Streptococcus lactis).